The sequence spans 559 residues: Frizzled-1 (559 aa).

An N-terminal signal peptide occupies residues 1–35; that stretch reads MKHSHLLQRCSAQLCTRGSSLILSLLLSVCLSVEG. Topologically, residues 36 to 239 are extracellular; the sequence is QYNGEKGISI…FAPEELNFAR (204 aa). An FZ domain is found at 46-165; that stretch reads PDHGYCQPIS…NGAGELCVGQ (120 aa). 5 disulfides stabilise this stretch: C51/C112, C59/C105, C96/C133, C122/C162, and C126/C150. N65 carries N-linked (GlcNAc...) asparagine glycosylation. An N-linked (GlcNAc...) asparagine glycan is attached at N166. The chain crosses the membrane as a helical span at residues 240 to 260; sequence IWIGIWSVLCCASTLFTVLTY. At 261-273 the chain is on the cytoplasmic side; that stretch reads LVDMKRFSYPERP. A helical membrane pass occupies residues 274 to 294; that stretch reads IIFLSGCYTMVAIAYIAGFLL. At 295 to 321 the chain is on the extracellular side; the sequence is EDKVVCNERFAEDGYKTVAQGTKKEGC. Residues 322 to 342 form a helical membrane-spanning segment; the sequence is TFLFMMLYFFSMASSIWWVIL. Over 343-364 the chain is Cytoplasmic; it reads SLTWFLAAGMKWGHEAIEANSQ. Residues 365–385 traverse the membrane as a helical segment; it reads YFHLAAWAVPAIKTITILAVG. Residues 386–408 lie on the Extracellular side of the membrane; that stretch reads QVDGDTLSGVCFVGINNVDALRG. Residues 409–429 traverse the membrane as a helical segment; it reads FVLAPLFVYLFIGTSFLLAGF. The Cytoplasmic portion of the chain corresponds to 430 to 455; the sequence is VSLFRIRTIMKHDGTKTEKLEKLMVR. A helical transmembrane segment spans residues 456–476; the sequence is IGIFSVLYTVPATIVIACYFY. Residues 477–513 lie on the Extracellular side of the membrane; it reads EQAFREQWEKSWISQSCKTYAIPCPSTGHPPMSPDFT. A helical transmembrane segment spans residues 514–534; that stretch reads VFMIKYLMTLIVGITSGFWIW. The Cytoplasmic portion of the chain corresponds to 535–559; that stretch reads SGKTLNSWRKFYTRLTNSKQGETTV. The Lys-Thr-X-X-X-Trp motif, mediates interaction with the PDZ domain of Dvl family members motif lies at 537 to 542; it reads KTLNSW. The short motif at 557 to 559 is the PDZ-binding element; that stretch reads TTV.

This sequence belongs to the G-protein coupled receptor Fz/Smo family. Interacts with wnt8. In the embryo, expressed in the heart, pronephros and otic vesicles.

The protein localises to the cell membrane. Its function is as follows. Receptor for Wnt proteins. Functions in the canonical Wnt/beta-catenin signaling pathway. The canonical Wnt/beta-catenin signaling pathway leads to the activation of disheveled proteins, inhibition of GSK-3 kinase, nuclear accumulation of beta-catenin and activation of Wnt target genes. A second signaling pathway involving PKC and calcium fluxes has been seen for some family members, but it is not yet clear if it represents a distinct pathway or if it can be integrated in the canonical pathway, as PKC seems to be required for Wnt-mediated inactivation of GSK-3 kinase. Both pathways seem to involve interactions with G-proteins. May be involved in transduction and intercellular transmission of polarity information during tissue morphogenesis and/or in differentiated tissues. This is Frizzled-1 (fzd1) from Xenopus laevis (African clawed frog).